Reading from the N-terminus, the 353-residue chain is uncharacterized protein (353 aa).

Belongs to the MG067/MG068/MG395 family.

This is an uncharacterized protein from Mycoplasma pneumoniae (strain ATCC 29342 / M129 / Subtype 1) (Mycoplasmoides pneumoniae).